The primary structure comprises 131 residues: Ribosome-binding factor A (131 aa).

This sequence belongs to the RbfA family. As to quaternary structure, monomer. Binds 30S ribosomal subunits, but not 50S ribosomal subunits or 70S ribosomes.

Its subcellular location is the cytoplasm. Functionally, one of several proteins that assist in the late maturation steps of the functional core of the 30S ribosomal subunit. Associates with free 30S ribosomal subunits (but not with 30S subunits that are part of 70S ribosomes or polysomes). Required for efficient processing of 16S rRNA. May interact with the 5'-terminal helix region of 16S rRNA. This chain is Ribosome-binding factor A, found in Chromohalobacter salexigens (strain ATCC BAA-138 / DSM 3043 / CIP 106854 / NCIMB 13768 / 1H11).